We begin with the raw amino-acid sequence, 466 residues long: Integrin-linked protein kinase homolog pat-4 (466 aa).

ANK repeat units follow at residues His-50–Ser-79, Gly-83–Ala-112, and His-116–Val-145. Residues Leu-210–Ile-465 enclose the Protein kinase domain.

Belongs to the protein kinase superfamily. TKL Ser/Thr protein kinase family. Interacts (via protein kinase domain) with unc-112 (via N-terminus). Interacts (via ANK repeats) with unc-97 (via first LIM domain). Interacts (via protein kinase domain) with pat-6 (via C-terminus CH domain). May form a complex with unc-112, unc-97 and pat-6. Does not interact with integrin pat-3. Component of an integrin containing attachment complex, composed of at least pat-2, pat-3, pat-4, pat-6, unc-52, unc-97 and unc-112. Expressed in body wall muscle.

It is found in the cytoplasm. The protein localises to the myofibril. Its subcellular location is the sarcomere. The protein resides in the m line. It localises to the basal cell membrane. Its function is as follows. Probable pseudokinase that acts as an adapter protein. Component of an integrin containing attachment complex, which is required for muscle development and maintenance. Involved in the assembly of dense bodies and M lines during body wall muscle development by recruiting several of their components including integrin pat-3, cpna-1, unc-89 and unc-112 to integrin-mediated attachment sites. Plays a role in distal tip cell (DTC) migration and in oocyte development probably by regulating the actin cytoskeleton. During the formation of neuromuscular junctions at the larval stage, negatively regulates membrane protrusion from body wall muscles. May be involved in thermotolerance and lifespan. The protein is Integrin-linked protein kinase homolog pat-4 of Caenorhabditis elegans.